Here is a 269-residue protein sequence, read N- to C-terminus: GTP cyclohydrolase FolE2 (269 aa).

This sequence belongs to the GTP cyclohydrolase IV family.

It carries out the reaction GTP + H2O = 7,8-dihydroneopterin 3'-triphosphate + formate + H(+). Its pathway is cofactor biosynthesis; 7,8-dihydroneopterin triphosphate biosynthesis; 7,8-dihydroneopterin triphosphate from GTP: step 1/1. Functionally, converts GTP to 7,8-dihydroneopterin triphosphate. This chain is GTP cyclohydrolase FolE2, found in Azoarcus sp. (strain BH72).